We begin with the raw amino-acid sequence, 157 residues long: Protein-export protein SecB (157 aa).

It belongs to the SecB family. Homotetramer, a dimer of dimers. One homotetramer interacts with 1 SecA dimer.

It localises to the cytoplasm. In terms of biological role, one of the proteins required for the normal export of preproteins out of the cell cytoplasm. It is a molecular chaperone that binds to a subset of precursor proteins, maintaining them in a translocation-competent state. It also specifically binds to its receptor SecA. The chain is Protein-export protein SecB from Dichelobacter nodosus (strain VCS1703A).